The chain runs to 362 residues: Chorismate synthase (362 aa).

2 residues coordinate NADP(+): R48 and R54. FMN is bound by residues 131–133 (RSS), 243–244 (NA), G287, 302–306 (KPTSS), and R328.

It belongs to the chorismate synthase family. In terms of assembly, homotetramer. FMNH2 serves as cofactor.

It catalyses the reaction 5-O-(1-carboxyvinyl)-3-phosphoshikimate = chorismate + phosphate. It participates in metabolic intermediate biosynthesis; chorismate biosynthesis; chorismate from D-erythrose 4-phosphate and phosphoenolpyruvate: step 7/7. In terms of biological role, catalyzes the anti-1,4-elimination of the C-3 phosphate and the C-6 proR hydrogen from 5-enolpyruvylshikimate-3-phosphate (EPSP) to yield chorismate, which is the branch point compound that serves as the starting substrate for the three terminal pathways of aromatic amino acid biosynthesis. This reaction introduces a second double bond into the aromatic ring system. The polypeptide is Chorismate synthase (Rhodopseudomonas palustris (strain TIE-1)).